A 173-amino-acid chain; its full sequence is Acireductone dioxygenase (173 aa).

Positions 1 to 21 (MKFYYHDNDSSVDQCAPHDSG) are disordered. Fe(2+) contacts are provided by H84, H86, E90, and H129. Ni(2+) contacts are provided by H84, H86, E90, and H129.

The protein belongs to the acireductone dioxygenase (ARD) family. Requires Fe(2+) as cofactor. The cofactor is Ni(2+).

It localises to the cytoplasm. The protein resides in the nucleus. The catalysed reaction is 1,2-dihydroxy-5-(methylsulfanyl)pent-1-en-3-one + O2 = 4-methylsulfanyl-2-oxobutanoate + formate + 2 H(+). It carries out the reaction 1,2-dihydroxy-5-(methylsulfanyl)pent-1-en-3-one + O2 = 3-(methylsulfanyl)propanoate + CO + formate + 2 H(+). The protein operates within amino-acid biosynthesis; L-methionine biosynthesis via salvage pathway; L-methionine from S-methyl-5-thio-alpha-D-ribose 1-phosphate: step 5/6. Functionally, catalyzes 2 different reactions between oxygen and the acireductone 1,2-dihydroxy-3-keto-5-methylthiopentene (DHK-MTPene) depending upon the metal bound in the active site. Fe-containing acireductone dioxygenase (Fe-ARD) produces formate and 2-keto-4-methylthiobutyrate (KMTB), the alpha-ketoacid precursor of methionine in the methionine recycle pathway. Ni-containing acireductone dioxygenase (Ni-ARD) produces methylthiopropionate, carbon monoxide and formate, and does not lie on the methionine recycle pathway. The protein is Acireductone dioxygenase of Yarrowia lipolytica (strain CLIB 122 / E 150) (Yeast).